The primary structure comprises 263 residues: 3-methyl-2-oxobutanoate hydroxymethyltransferase (263 aa).

Residues Asp-45 and Asp-84 each contribute to the Mg(2+) site. Residues 45–46 (DS), Asp-84, and Lys-112 contribute to the 3-methyl-2-oxobutanoate site. Mg(2+) is bound at residue Glu-114. Glu-181 (proton acceptor) is an active-site residue.

It belongs to the PanB family. As to quaternary structure, homodecamer; pentamer of dimers. The cofactor is Mg(2+).

It localises to the cytoplasm. The enzyme catalyses 3-methyl-2-oxobutanoate + (6R)-5,10-methylene-5,6,7,8-tetrahydrofolate + H2O = 2-dehydropantoate + (6S)-5,6,7,8-tetrahydrofolate. It participates in cofactor biosynthesis; (R)-pantothenate biosynthesis; (R)-pantoate from 3-methyl-2-oxobutanoate: step 1/2. Catalyzes the reversible reaction in which hydroxymethyl group from 5,10-methylenetetrahydrofolate is transferred onto alpha-ketoisovalerate to form ketopantoate. The chain is 3-methyl-2-oxobutanoate hydroxymethyltransferase from Photorhabdus laumondii subsp. laumondii (strain DSM 15139 / CIP 105565 / TT01) (Photorhabdus luminescens subsp. laumondii).